We begin with the raw amino-acid sequence, 609 residues long: Membrane protein insertase YidC (609 aa).

The helical transmembrane segment at 9–29 (IIAIVLSGLILIAWQYFYNIP) threads the bilayer. Residues 35–63 (RAAQQAQSQTAKSPTEPTPNSPKPDHPAA) form a disordered region. 4 helical membrane-spanning segments follow: residues 375–395 (VFGN…AIFF), 449–469 (LPMV…FVTI), 507–527 (LLGP…TMWF), and 546–566 (WMPV…VIYW).

This sequence belongs to the OXA1/ALB3/YidC family. Type 1 subfamily. Interacts with the Sec translocase complex via SecD. Specifically interacts with transmembrane segments of nascent integral membrane proteins during membrane integration.

Its subcellular location is the cell inner membrane. Required for the insertion and/or proper folding and/or complex formation of integral membrane proteins into the membrane. Involved in integration of membrane proteins that insert both dependently and independently of the Sec translocase complex, as well as at least some lipoproteins. Aids folding of multispanning membrane proteins. The protein is Membrane protein insertase YidC of Nitrobacter hamburgensis (strain DSM 10229 / NCIMB 13809 / X14).